A 1169-amino-acid polypeptide reads, in one-letter code: Zinc finger protein 862 (1169 aa).

The KRAB 1 domain occupies 11–77 (VTFDDITVYL…SVQGQRSLLE (67 aa)). The segment at 135 to 218 (KPRSIQKSWF…RDPIWAARFR (84 aa)) adopts a TTF-type 1 zinc-finger fold. One can recognise a KRAB 2 domain in the interval 333–404 (VVFEDVAVYF…DPNGPKWGKG (72 aa)). A TTF-type 2 zinc finger spans residues 461-544 (RPRSIQRSWF…KEDTPHTALV (84 aa)).

It is found in the nucleus. May be involved in transcriptional regulation. The sequence is that of Zinc finger protein 862 (ZNF862) from Homo sapiens (Human).